A 73-amino-acid chain; its full sequence is Crustacean hyperglycemic hormone (73 aa).

Disulfide bonds link C7-C43, C23-C39, and C26-C52. S73 is subject to Serine amide.

In terms of tissue distribution, produced by the medulla terminalis X-organ in the eyestalks and transported to the sinus gland where they are stored and released. Found also in the brain; in the neuroendocrine structures of the protocerebrum.

The protein resides in the secreted. In terms of biological role, hormone found in the sinus gland of isopods and decapods which controls the blood sugar level. Has a secretagogue action over the amylase released from the midgut gland. May act as a stress hormone and may be involved in the control of molting and reproduction. The sequence is that of Crustacean hyperglycemic hormone from Armadillidium vulgare (Pillbug).